Reading from the N-terminus, the 547-residue chain is MKLTKWALPLFFLLFYLLPLDQRPLWSPDENRYAEISREMVSTGDWVVPHFLGLRYFEKPIAGYWFNSISQQLFGDTNFAVRFASAAATGLSALLIVWFALQLWQCRRKAFLAGLIYLSLLIVYGIGTYSVLDAMVTLWLNAAMVSFYLIRQEGPLRTRVAGYLLFGLACGMGFLTKGFIALAVPVIVIVPYVIYQRRLPELLRFGPLAMVSAALLAAPWAIAVHLREPDYWHYFFWVEHIQRFAADNAQHKAPFWYYLPMGLLGTLPWLGLLPGALRKGWQDRKISPETLYLLAWVVLPLLFFSVAKGKLLTYILPCFAPLAMLLAASAVDLLKEGKERAFRVNAWLNGLFGLICLAVLAVLALSPSHAVYGEEDHGALAVAMVIFAGWALLGFIQLKDVSRRWTLSALCPMVLAVGLPWALPQSLIDSKLPERFIEANQTVLMDSSSLLANDVGLASSLAWGTRRSEIQLFDSKGEVHYGLSYPDAKERYVTRSDFPAWLAEARKNGQVALLLKTDKDGSTGSLPPADETIVSHRLTLLVYHGAR.

11 consecutive transmembrane segments (helical) span residues M1–D21, F83–L103, F111–V131, F174–I194, F205–H225, A253–L273, I286–V306, L311–V331, A346–S366, G378–L398, and S408–I428.

This sequence belongs to the glycosyltransferase 83 family.

Its subcellular location is the cell inner membrane. It catalyses the reaction 4-amino-4-deoxy-alpha-L-arabinopyranosyl di-trans,octa-cis-undecaprenyl phosphate + lipid IVA = lipid IIA + di-trans,octa-cis-undecaprenyl phosphate.. It participates in lipopolysaccharide metabolism; 4-amino-4-deoxy-beta-L-arabinose-lipid A biosynthesis. In terms of biological role, catalyzes the transfer of the L-Ara4N moiety of the glycolipid undecaprenyl phosphate-alpha-L-Ara4N to lipid A. The modified arabinose is attached to lipid A and is required for resistance to polymyxin and cationic antimicrobial peptides. The polypeptide is Undecaprenyl phosphate-alpha-4-amino-4-deoxy-L-arabinose arabinosyl transferase (Aeromonas salmonicida (strain A449)).